A 444-amino-acid polypeptide reads, in one-letter code: Phosphoglucosamine mutase (444 aa).

The active-site Phosphoserine intermediate is Ser-102. Positions 102, 241, 243, and 245 each coordinate Mg(2+). Position 102 is a phosphoserine (Ser-102).

The protein belongs to the phosphohexose mutase family. Requires Mg(2+) as cofactor. In terms of processing, activated by phosphorylation.

It carries out the reaction alpha-D-glucosamine 1-phosphate = D-glucosamine 6-phosphate. Its function is as follows. Catalyzes the conversion of glucosamine-6-phosphate to glucosamine-1-phosphate. The chain is Phosphoglucosamine mutase from Histophilus somni (strain 2336) (Haemophilus somnus).